The chain runs to 325 residues: Transaldolase (325 aa).

Catalysis depends on K125, which acts as the Schiff-base intermediate with substrate.

The protein belongs to the transaldolase family. Type 2 subfamily.

It is found in the cytoplasm. The catalysed reaction is D-sedoheptulose 7-phosphate + D-glyceraldehyde 3-phosphate = D-erythrose 4-phosphate + beta-D-fructose 6-phosphate. The protein operates within carbohydrate degradation; pentose phosphate pathway; D-glyceraldehyde 3-phosphate and beta-D-fructose 6-phosphate from D-ribose 5-phosphate and D-xylulose 5-phosphate (non-oxidative stage): step 2/3. Functionally, transaldolase is important for the balance of metabolites in the pentose-phosphate pathway. This chain is Transaldolase, found in Campylobacter jejuni subsp. doylei (strain ATCC BAA-1458 / RM4099 / 269.97).